Consider the following 759-residue polypeptide: Glucosylceramidase (759 aa).

Glutamate 247 serves as the catalytic Proton donor. Residue glutamate 497 is the Nucleophile of the active site. Positions 576–600 are disordered; the sequence is AFENESQRDPQSPAYSESQRNTESY. A compositionally biased stretch (polar residues) spans 584–599; sequence DPQSPAYSESQRNTES.

This sequence belongs to the glycosyl hydrolase 5 (cellulase A) family.

The protein localises to the membrane. It carries out the reaction a beta-D-glucosyl-(1&lt;-&gt;1')-N-acylsphing-4-enine + H2O = an N-acylsphing-4-enine + D-glucose. Specifically hydrolyzes the glucosidic linkage in glucosylceramide. May prevent accumulation of aberrent glucosylceramide containing immature ceramide. The protein is Glucosylceramidase of Aspergillus fumigatus (Neosartorya fumigata).